The chain runs to 434 residues: Serine--tRNA ligase (434 aa).

T239–E241 lines the L-serine pocket. Residue R270–E272 coordinates ATP. Residue E293 participates in L-serine binding. E357–S360 contacts ATP. Position 392 (S392) interacts with L-serine.

This sequence belongs to the class-II aminoacyl-tRNA synthetase family. Type-1 seryl-tRNA synthetase subfamily. In terms of assembly, homodimer. The tRNA molecule binds across the dimer.

Its subcellular location is the cytoplasm. The catalysed reaction is tRNA(Ser) + L-serine + ATP = L-seryl-tRNA(Ser) + AMP + diphosphate + H(+). It carries out the reaction tRNA(Sec) + L-serine + ATP = L-seryl-tRNA(Sec) + AMP + diphosphate + H(+). It participates in aminoacyl-tRNA biosynthesis; selenocysteinyl-tRNA(Sec) biosynthesis; L-seryl-tRNA(Sec) from L-serine and tRNA(Sec): step 1/1. In terms of biological role, catalyzes the attachment of serine to tRNA(Ser). Is also able to aminoacylate tRNA(Sec) with serine, to form the misacylated tRNA L-seryl-tRNA(Sec), which will be further converted into selenocysteinyl-tRNA(Sec). The sequence is that of Serine--tRNA ligase from Cupriavidus necator (strain ATCC 17699 / DSM 428 / KCTC 22496 / NCIMB 10442 / H16 / Stanier 337) (Ralstonia eutropha).